Consider the following 242-residue polypeptide: Uridylate kinase (242 aa).

12-15 (KLSG) lines the ATP pocket. An involved in allosteric activation by GTP region spans residues 20 to 25 (GNDGFG). Gly-54 provides a ligand contact to UMP. Residues Gly-55 and Arg-59 each coordinate ATP. UMP-binding positions include Asp-74 and 135–142 (TGNPYFST). The ATP site is built by Asn-163, Tyr-169, and Asp-172.

The protein belongs to the UMP kinase family. As to quaternary structure, homohexamer.

The protein localises to the cytoplasm. The enzyme catalyses UMP + ATP = UDP + ADP. Its pathway is pyrimidine metabolism; CTP biosynthesis via de novo pathway; UDP from UMP (UMPK route): step 1/1. Allosterically activated by GTP. Inhibited by UTP. Functionally, catalyzes the reversible phosphorylation of UMP to UDP. This Listeria innocua serovar 6a (strain ATCC BAA-680 / CLIP 11262) protein is Uridylate kinase.